We begin with the raw amino-acid sequence, 499 residues long: Lysine--tRNA ligase (499 aa).

The Mg(2+) site is built by E408 and E415.

Belongs to the class-II aminoacyl-tRNA synthetase family. In terms of assembly, homodimer. The cofactor is Mg(2+).

It is found in the cytoplasm. The enzyme catalyses tRNA(Lys) + L-lysine + ATP = L-lysyl-tRNA(Lys) + AMP + diphosphate. This Thermoanaerobacter sp. (strain X514) protein is Lysine--tRNA ligase.